Here is a 328-residue protein sequence, read N- to C-terminus: tRNA uridine(34) hydroxylase (328 aa).

A Rhodanese domain is found at 130-224 (LDKDTVVLDT…YGKDPEVQGE (95 aa)). The active-site Cysteine persulfide intermediate is the Cys-184.

This sequence belongs to the TrhO family.

The enzyme catalyses uridine(34) in tRNA + AH2 + O2 = 5-hydroxyuridine(34) in tRNA + A + H2O. Functionally, catalyzes oxygen-dependent 5-hydroxyuridine (ho5U) modification at position 34 in tRNAs. This is tRNA uridine(34) hydroxylase from Streptococcus pneumoniae (strain Taiwan19F-14).